Reading from the N-terminus, the 129-residue chain is Fluoride-specific ion channel FluC (129 aa).

A run of 4 helical transmembrane segments spans residues 4–24 (LFVA…SGLI), 32–52 (FPWG…AFAT), 69–89 (FFMV…LQTL), and 105–125 (VLSV…AVLI). Positions 76 and 79 each coordinate Na(+).

The protein belongs to the fluoride channel Fluc/FEX (TC 1.A.43) family.

Its subcellular location is the cell inner membrane. It catalyses the reaction fluoride(in) = fluoride(out). Its activity is regulated as follows. Na(+) is not transported, but it plays an essential structural role and its presence is essential for fluoride channel function. Functionally, fluoride-specific ion channel. Important for reducing fluoride concentration in the cell, thus reducing its toxicity. The protein is Fluoride-specific ion channel FluC of Rhodospirillum rubrum (strain ATCC 11170 / ATH 1.1.1 / DSM 467 / LMG 4362 / NCIMB 8255 / S1).